A 189-amino-acid polypeptide reads, in one-letter code: Elongation factor P (189 aa).

The residue at position 34 (Lys34) is an N6-(3,6-diaminohexanoyl)-5-hydroxylysine.

This sequence belongs to the elongation factor P family. Post-translationally, may be beta-lysylated on the epsilon-amino group of Lys-34 by the combined action of EpmA and EpmB, and then hydroxylated on the C5 position of the same residue by EpmC (if this protein is present). Lysylation is critical for the stimulatory effect of EF-P on peptide-bond formation. The lysylation moiety may extend toward the peptidyltransferase center and stabilize the terminal 3-CCA end of the tRNA. Hydroxylation of the C5 position on Lys-34 may allow additional potential stabilizing hydrogen-bond interactions with the P-tRNA.

It is found in the cytoplasm. Its pathway is protein biosynthesis; polypeptide chain elongation. In terms of biological role, involved in peptide bond synthesis. Alleviates ribosome stalling that occurs when 3 or more consecutive Pro residues or the sequence PPG is present in a protein, possibly by augmenting the peptidyl transferase activity of the ribosome. Modification of Lys-34 is required for alleviation. The polypeptide is Elongation factor P (Buchnera aphidicola subsp. Baizongia pistaciae (strain Bp)).